We begin with the raw amino-acid sequence, 165 residues long: Nucleotide-binding protein Rcas_1283 (165 aa).

It belongs to the YajQ family.

Nucleotide-binding protein. In Roseiflexus castenholzii (strain DSM 13941 / HLO8), this protein is Nucleotide-binding protein Rcas_1283.